Reading from the N-terminus, the 415-residue chain is Serine hydroxymethyltransferase 2 (415 aa).

Residues Leu-122 and 126–128 (GHL) each bind (6S)-5,6,7,8-tetrahydrofolate. Lys-230 is subject to N6-(pyridoxal phosphate)lysine.

The protein belongs to the SHMT family. In terms of assembly, homodimer. Requires pyridoxal 5'-phosphate as cofactor.

The protein resides in the cytoplasm. The enzyme catalyses (6R)-5,10-methylene-5,6,7,8-tetrahydrofolate + glycine + H2O = (6S)-5,6,7,8-tetrahydrofolate + L-serine. Its pathway is one-carbon metabolism; tetrahydrofolate interconversion. It participates in amino-acid biosynthesis; glycine biosynthesis; glycine from L-serine: step 1/1. Functionally, catalyzes the reversible interconversion of serine and glycine with tetrahydrofolate (THF) serving as the one-carbon carrier. This reaction serves as the major source of one-carbon groups required for the biosynthesis of purines, thymidylate, methionine, and other important biomolecules. Also exhibits THF-independent aldolase activity toward beta-hydroxyamino acids, producing glycine and aldehydes, via a retro-aldol mechanism. This is Serine hydroxymethyltransferase 2 from Burkholderia lata (strain ATCC 17760 / DSM 23089 / LMG 22485 / NCIMB 9086 / R18194 / 383).